The primary structure comprises 84 residues: Conotoxin Tx8.1 (84 aa).

An N-terminal signal peptide occupies residues leucine 1–histidine 19. The propeptide occupies arginine 20–arginine 44.

It belongs to the conotoxin S superfamily. Contains 5 disulfide bonds. As to expression, expressed by the venom duct.

The protein localises to the secreted. This Conus textile (Cloth-of-gold cone) protein is Conotoxin Tx8.1.